We begin with the raw amino-acid sequence, 406 residues long: MTEGHPDKICDQISDTILDALLTEDPSSRVAAEVVVNTGLVLITGEVSTQAQTNLIDLARRKIAETGYTGEDSGFGANNCTVLIALDKQSPDIAQGVDTAQEQRQASSDERFDSIGAGDQGIMFGYACNEAPELMPLPISLSHRLARQLAVVRHNGQLDYLRPDGKTQVTIAYEDGKPVAIDTILISTQHKAAIGDISDDNAVQERIKSDLWEQVVLPVFSDLVIQPDSATRFLVNPTGKFVIGGPQGDAGLTGRKIIVDTYGGYSRHGGGAFSGKDPTKVDRSAAYACRYVAKNIVAAGLAEKCEVQLSYAIGVARPVSVLVETFGTGKVADEVLLDLVRKHFELHPAGIIEHFNLQRLPGERGGRFYQEVAAYGHFGRNDLDLPWEQTDKADTLRQEALATTQA.

Histidine 5 is an ATP binding site. Residue aspartate 7 coordinates Mg(2+). Glutamate 33 serves as a coordination point for K(+). The L-methionine site is built by glutamate 46 and glutamine 89. A flexible loop region spans residues 89-99 (QSPDIAQGVDT). Residues 164–166 (DGK), 240–241 (KF), aspartate 249, 255–256 (RK), alanine 272, and lysine 276 each bind ATP. Aspartate 249 is a binding site for L-methionine. Residue lysine 280 coordinates L-methionine.

The protein belongs to the AdoMet synthase family. As to quaternary structure, homotetramer; dimer of dimers. Mg(2+) serves as cofactor. K(+) is required as a cofactor.

Its subcellular location is the cytoplasm. The enzyme catalyses L-methionine + ATP + H2O = S-adenosyl-L-methionine + phosphate + diphosphate. It participates in amino-acid biosynthesis; S-adenosyl-L-methionine biosynthesis; S-adenosyl-L-methionine from L-methionine: step 1/1. In terms of biological role, catalyzes the formation of S-adenosylmethionine (AdoMet) from methionine and ATP. The overall synthetic reaction is composed of two sequential steps, AdoMet formation and the subsequent tripolyphosphate hydrolysis which occurs prior to release of AdoMet from the enzyme. In Synechococcus sp. (strain ATCC 27144 / PCC 6301 / SAUG 1402/1) (Anacystis nidulans), this protein is S-adenosylmethionine synthase.